The primary structure comprises 477 residues: MVLMQDKGSSQQWPGLGGEGGGTGPLSMLRAALLLISLPWGAQGTASTSLSTAGGHTVPPTGGRYLSIGDGSVMEFEFPEDSEGIIVISSQYPGQANRTAPGPMLRVTSLDTEVLTIKNVSAITWGGGGGFVVSIHSGLAGLAPLHIQLVDAHEAPPTLIEERRDFCIKVSPAEDTPATLSADLAHFSENPILYLLLPLIFVNKCSFGCKVELEVLKGLMQSPQPMLLGLLGQFLVMPLYAFLMAKVFMLPKALALGLIITCSSPGGGGSYLFSLLLGGDVTLAISMTFLSTVAATGFLPLSSAIYSRLLSIHETLHVPISKILGTLLFIAIPIAVGVLIKSKLPKFSQLLLQVVKPFSFVLLLGGLFLAYRMGVFILAGIRLPIVLVGITVPLVGLLVGYCLATCLKLPVAQRRTVSIEVGVQNSLLALAMLQLSLRRLQADYASQAPFIVALSGTSEMLALVIGHFIYSSLFPVP.

The segment at M1–G21 is disordered. A run of 8 helical transmembrane segments spans residues P225 to A245, A253 to F273, V281 to L301, I320 to I340, V361 to I381, L383 to L403, V417 to L437, and F450 to Y470.

The protein belongs to the bile acid:sodium symporter (BASS) (TC 2.A.28) family.

It is found in the membrane. Functionally, the ubiquitous expression and the conservation of the sequence in distant animal species suggest that the gene codes for a protein with housekeeping functions. This chain is P3 protein (SLC10A3), found in Homo sapiens (Human).